A 205-amino-acid polypeptide reads, in one-letter code: Octanoyltransferase (205 aa).

The region spanning 30-205 is the BPL/LPL catalytic domain; it reads ERTADEIWLL…QALRARLGYA (176 aa). Substrate contacts are provided by residues 69–76, 136–138, and 149–151; these read RGGQVTYH, SLG, and GLA. Cysteine 167 acts as the Acyl-thioester intermediate in catalysis.

Belongs to the LipB family.

Its subcellular location is the cytoplasm. The enzyme catalyses octanoyl-[ACP] + L-lysyl-[protein] = N(6)-octanoyl-L-lysyl-[protein] + holo-[ACP] + H(+). It functions in the pathway protein modification; protein lipoylation via endogenous pathway; protein N(6)-(lipoyl)lysine from octanoyl-[acyl-carrier-protein]: step 1/2. In terms of biological role, catalyzes the transfer of endogenously produced octanoic acid from octanoyl-acyl-carrier-protein onto the lipoyl domains of lipoate-dependent enzymes. Lipoyl-ACP can also act as a substrate although octanoyl-ACP is likely to be the physiological substrate. In Ectopseudomonas mendocina (strain ymp) (Pseudomonas mendocina), this protein is Octanoyltransferase.